A 769-amino-acid polypeptide reads, in one-letter code: MNIYNKLRAREHGYGNERTYDFALRRLSVAKEDSWRGIAPANYCPDFNPEPPIFSAKFANCDGYRHILAIANEDGKITLQDTTQRNHQPEEQSLVGPQCHFNAVFDLEWAPGQMRFVSASGDHTARLWEVAGSGIRGLNSYVGHTRSVKSAAFKRTDPAVFATGGRDGAILIWDIRANLNMDLTSRVDNCIYSGHTGGPGTPVSQRKQRTRTPKMAGGTTSSSITGLAFQDNDTLISCGAGDGVIKVWDLRRNYTAYKKEPLPRHKLPYAGSSTFRGFTNLIVDASGTRLYANCMDNTIYCYNLASYSQRPLACYKGLLNSTFYIKSCLSPDGKYLLSGSSDERAYIWNLDHAEEPLVALAGHTVEVTCVAWGSSHDCPIVTCSDDARHKIWRIGPDLDGLSEAERAEKYRGTASYVREFGKKAFGPSSGNHKYNLRDLESTPRSLKRLMDQNERTPGSVEKTTTKRSFLEMLGVAGQETEATEQPQKRAKPLESRGRRLFGPSSQETACRHIQLQSINEEDASPSKRQKENSAAEDVSPLHKLLSTPSHSPLSENVNHVYTSPPTTSAAAAAVAADALNPPPISAAIYSPTSNLPNYVLDGEAPHLGIMSPKRKAKEKVDWLTNIRKQKLMSGRAHVTLSEKISEEQQADVLASPRLQSLRQSECSPRIHASPRRRISHTDGGGGTPAGSSSHSHSQSQPKTPTSSRRNSETTLLRFFSIQRSSSVPAEETTTTNAAPSSSDPHPPAVTAPAATPLSMRTPTTAVGSD.

6 WD repeats span residues 99-129, 143-174, 194-249, 264-303, 320-349, and 362-393; these read CHFNAVFDLEWAPGQMRFVSASGDHTARLWE, GHTRSVKSAAFKRTDPAVFATGGRDGAILIWD, GHTG…KVWD, RHKLPYAGSSTFRGFTNLIVDASGTRLYANCMDNTIYCYN, NSTFYIKSCLSPDGKYLLSGSSDERAYIWN, and GHTVEVTCVAWGSSHDCPIVTCSDDARHKIWR. Residues 196 to 221 form a disordered region; it reads TGGPGTPVSQRKQRTRTPKMAGGTTS. Threonine 201 is subject to Phosphothreonine. Serine 204 bears the Phosphoserine mark. 3 disordered regions span residues 448–467, 476–562, and 655–769; these read RLMDQNERTPGSVEKTTTKR, AGQE…HVYT, and SPRL…VGSD. The residue at position 456 (threonine 456) is a Phosphothreonine. Residue serine 459 is modified to Phosphoserine. Positions 503 to 518 are enriched in polar residues; sequence PSSQETACRHIQLQSI. Serine 524 carries the post-translational modification Phosphoserine. Residues 524-533 are compositionally biased toward basic and acidic residues; sequence SPSKRQKENS. The segment covering 546 to 562 has biased composition (polar residues); it reads STPSHSPLSENVNHVYT. Position 655 is a phosphoserine (serine 655). Positions 657-666 are enriched in polar residues; it reads RLQSLRQSEC. Residues serine 679, serine 691, and serine 711 each carry the phosphoserine modification. Over residues 689 to 704 the composition is skewed to low complexity; sequence AGSSSHSHSQSQPKTP. Positions 705-714 are enriched in polar residues; that stretch reads TSSRRNSETT. Residues 728–743 show a composition bias toward low complexity; that stretch reads PAEETTTTNAAPSSSD. Residues 758 to 769 show a composition bias toward polar residues; that stretch reads SMRTPTTAVGSD.

The protein belongs to the WD repeat cdt2 family. In terms of assembly, component of the DCX(DTL) E3 ubiquitin ligase complex, at least composed of Cul-4, pic/DDB1, l(2)dtl/CDT2 and Roc1a. Ubiquitously expressed during embryogenesis with no sign of tissue specificity in expression up to stage 17.

Its subcellular location is the cytoplasm. Its pathway is protein modification; protein ubiquitination. Its function is as follows. Substrate-specific adapter of a DCX (DDB1-CUL4-X-box) E3 ubiquitin-protein ligase complex required for cell cycle control. The DCX(DTL) complex, also named CRL4(CDT2) complex, mediates the polyubiquitination and subsequent degradation of E2f during S phase. E2f degradation is necessary to ensure proper development. Substrates require their interaction with PCNA for their polyubiquitination: substrates interact with PCNA via their PIP-box, leading to recruit the DCX(DTL) complex. This is Protein lethal(2)denticleless (l(2)dtl) from Drosophila melanogaster (Fruit fly).